The primary structure comprises 337 residues: Inner membrane protein YhjD (337 aa).

The span at 1–29 (MTQENEIKRPIQDLEHEPIKPLDNSEKGS) shows a compositional bias: basic and acidic residues. A disordered region spans residues 1–31 (MTQENEIKRPIQDLEHEPIKPLDNSEKGSKV). The Cytoplasmic segment spans residues 1–74 (MTQENEIKRP…LGNQFGAAIT (74 aa)). A helical transmembrane segment spans residues 75–97 (YFSFLSMIPILMVSFAAGGFVLA). Topologically, residues 98 to 133 (SHPMLLQDIFDKILQNISDPTLAATLKNTINTAVQQ) are periplasmic. The chain crosses the membrane as a helical span at residues 134–156 (RTTVGLVGLAVALYSGINWMGNL). At 157–185 (REAIRAQSRDVWERSPQDQEKFWVKYLRD) the chain is on the cytoplasmic side. The helical transmembrane segment at 186-208 (FISLIGLLIALIVTLSITSVAGS) threads the bilayer. Residues 209-227 (AQQMIISALHLNSIEWLKP) are Periplasmic-facing. A helical transmembrane segment spans residues 228–250 (TWRLIGLAISIFANYLLFFWIFW). The Cytoplasmic portion of the chain corresponds to 251 to 261 (RLPRHRPRKKA). Residues 262 to 284 (LIRGTFLAAIGFEVIKIVMTYTL) traverse the membrane as a helical segment. At 285-298 (PSLMKSPSGAAFGS) the chain is on the periplasmic side. Residues 299 to 321 (VLGLMAFFYFFARLTLFCAAWIA) form a helical membrane-spanning segment. Over 322–337 (TAEYKDDPRMPGKTQP) the chain is Cytoplasmic.

Its subcellular location is the cell inner membrane. This is Inner membrane protein YhjD (yhjD) from Escherichia coli (strain K12).